The primary structure comprises 1708 residues: Clathrin heavy chain 2 (1708 aa).

Residues 1 to 492 (MAAANAPIAM…VDNDLALKIY (492 aa)) are globular terminal domain. WD40-like repeat regions lie at residues 25 to 67 (FVTF…RPIT), 68 to 113 (ADSA…MPEQ), 114 to 155 (VVFW…ANLA), 156 to 205 (NNQI…QALE), 206 to 270 (AHAA…PDFQ), 271 to 314 (DDFP…ISPD), and 315 to 343 (PIFLTAESSASGGFYAINRRGQVLHATVN). Residues 462–478 (ENWLAEDKLECSEELGD) form a binding site for the uncoating ATPase, involved in lattice disassembly region. Residues 493 to 536 (IKARATPKVVAAFAERREFDKILIYSKQVGYTPDYLFLLQTILR) are flexible linker. Residues 537 to 648 (TDPQGAVNFA…RALQHYTELP (112 aa)) form a distal segment region. The heavy chain arm stretch occupies residues 537–1708 (TDPQGAVNFA…AYGMPPMGSY (1172 aa)). 7 CHCR repeats span residues 551-697 (QMEG…QIVV), 700-842 (AKEY…PEDF), 847-986 (ILSV…QLID), 993-1138 (LPES…VSEA), 1142-1283 (FIRA…FRLA), 1288-1434 (LNII…DLIN), and 1437-1580 (LNVL…KECF). The tract at residues 653–1708 (VMVNTHAIEP…AYGMPPMGSY (1056 aa)) is proximal segment. The tract at residues 1227 to 1536 (AAKIIYAFIS…YIYKKAGRWK (310 aa)) is involved in binding clathrin light chain. The interval 1564-1708 (SEDLLVYFIE…AYGMPPMGSY (145 aa)) is trimerization.

This sequence belongs to the clathrin heavy chain family. Clathrin triskelions, composed of 3 heavy chains and 3 light chains, are the basic subunits of the clathrin coat.

The protein localises to the cytoplasmic vesicle membrane. It is found in the membrane. It localises to the coated pit. Its function is as follows. Clathrin is the major protein of the polyhedral coat of coated pits and vesicles. In Oryza sativa subsp. japonica (Rice), this protein is Clathrin heavy chain 2.